We begin with the raw amino-acid sequence, 392 residues long: Basic salivary proline-rich protein 1 (392 aa).

Residues 1-16 form the signal peptide; it reads MLLILLSVALLALSSA. Glutamine 17 is modified (pyrrolidone carboxylic acid). Residues 19–28 are compositionally biased toward polar residues; the sequence is LNEDVSQEES. The interval 19–392 is disordered; it reads LNEDVSQEES…QGGRPSRPPQ (374 aa). Positions 34–47 are enriched in low complexity; sequence GNPQGPSPQGGNKP. Serine 40 bears the Phosphoserine; alternate mark. The O-linked (Hex) serine; alternate glycan is linked to serine 40. A compositionally biased stretch (pro residues) spans 48-83; it reads QGPPPPPGKPQGPPPQGGNKPQGPPPPGKPQGPPPQ. Tandem repeats lie at residues 53-72, 73-92, 93-112, 114-133, 134-153, 154-173, 175-194, 195-214, 215-234, 236-255, 256-275, 276-295, 297-316, 317-336, and 338-357. Residues 53–357 form a 15 X 20 AA approximate tandem repeats of P-P-G-K-P-Q-G-P-P-[PAQ]-Q-[GE]-[GD]-[NKS]-[KSQRN]-[PRQS]-[QS] [GPS]-[PQAR]-[PSR] region; the sequence is PPGKPQGPPP…QEGNNPQGPP (305 aa). Serine 87 carries an O-linked (HexNAc...) serine glycan. Over residues 91 to 144 the composition is skewed to pro residues; that stretch reads RSPPGKPQGPPPQGGNQPQGPPPPPGKPQGPPPQGGNKPQGPPPPGKPQGPPPQ. Phosphoserine is present on serine 92. A Phosphoserine; alternate modification is found at serine 150. Serine 150 carries an O-linked (Hex) serine; alternate glycan. Composition is skewed to pro residues over residues 152-205, 213-243, 252-266, and 274-324; these read RSPP…PPPQ, RSPP…PQGP, QGPP…PPPQ, and QSPP…PQGP. Residues 325–334 show a composition bias toward low complexity; that stretch reads PAQGGSKSQS. O-linked (HexNAc...) serine glycosylation occurs at serine 330. The span at 354–392 shows a compositional bias: pro residues; sequence QGPPPPAGGNPQQPQAPPAGQPQGPPRPPQGGRPSRPPQ.

Post-translationally, O-glycosylated. O-glycosylation on Ser-87 is prevalent in head and neck cancer patients. O-Glycosylation on Ser-330 has a 5 times prevalence in head and neck cancers. Proteolytically cleaved at the tripeptide Xaa-Pro-Gln, where Xaa in the P(3) position is mostly lysine. The endoprotease may be of microbial origin. In terms of processing, pyroglutamate formation occurs on terminal Gln residues of cleaved peptides. Besides on the N-terminal of mature PBR1, pyroglutamate formation found on at least Gln-58.

The protein localises to the secreted. This chain is Basic salivary proline-rich protein 1 (PRB1), found in Homo sapiens (Human).